Here is a 431-residue protein sequence, read N- to C-terminus: UDP-N-acetylglucosamine 1-carboxyvinyltransferase (431 aa).

22–23 (KN) provides a ligand contact to phosphoenolpyruvate. UDP-N-acetyl-alpha-D-glucosamine is bound at residue arginine 102. Cysteine 126 serves as the catalytic Proton donor. Cysteine 126 bears the 2-(S-cysteinyl)pyruvic acid O-phosphothioketal mark. Positions 318 and 340 each coordinate UDP-N-acetyl-alpha-D-glucosamine.

It belongs to the EPSP synthase family. MurA subfamily.

It localises to the cytoplasm. It carries out the reaction phosphoenolpyruvate + UDP-N-acetyl-alpha-D-glucosamine = UDP-N-acetyl-3-O-(1-carboxyvinyl)-alpha-D-glucosamine + phosphate. The protein operates within cell wall biogenesis; peptidoglycan biosynthesis. In terms of biological role, cell wall formation. Adds enolpyruvyl to UDP-N-acetylglucosamine. This Bartonella tribocorum (strain CIP 105476 / IBS 506) protein is UDP-N-acetylglucosamine 1-carboxyvinyltransferase.